A 328-amino-acid chain; its full sequence is Malate dehydrogenase 1 (328 aa).

Position 12–18 (12–18 (GAAGQIA)) interacts with NAD(+). Residues Arg93 and Arg99 each contribute to the substrate site. Residues Asn106, Gln113, and 130 to 132 (VGN) contribute to the NAD(+) site. 2 residues coordinate substrate: Asn132 and Arg163. The active-site Proton acceptor is His188.

The protein belongs to the LDH/MDH superfamily. MDH type 2 family.

It catalyses the reaction (S)-malate + NAD(+) = oxaloacetate + NADH + H(+). In terms of biological role, catalyzes the reversible oxidation of malate to oxaloacetate. In Burkholderia vietnamiensis (strain G4 / LMG 22486) (Burkholderia cepacia (strain R1808)), this protein is Malate dehydrogenase 1.